The chain runs to 467 residues: Chromosomal replication initiator protein DnaA (467 aa).

The segment at 1-90 is domain I, interacts with DnaA modulators; it reads MSLSLWQQCL…KPVTQTPQAA (90 aa). The tract at residues 91–130 is domain II; the sequence is VTSNVAAPAQVAQTQPQRAAPSMRSGWDNVPAPAEPTYRS. The tract at residues 131–347 is domain III, AAA+ region; sequence NVNVKHTFDN…GALNRVIANA (217 aa). Residues glycine 175, glycine 177, lysine 178, and threonine 179 each contribute to the ATP site. A domain IV, binds dsDNA region spans residues 348-467; sequence NFTGRAITID…FSNLIRTLSS (120 aa).

The protein belongs to the DnaA family. In terms of assembly, oligomerizes as a right-handed, spiral filament on DNA at oriC.

It localises to the cytoplasm. Its function is as follows. Plays an essential role in the initiation and regulation of chromosomal replication. ATP-DnaA binds to the origin of replication (oriC) to initiate formation of the DNA replication initiation complex once per cell cycle. Binds the DnaA box (a 9 base pair repeat at the origin) and separates the double-stranded (ds)DNA. Forms a right-handed helical filament on oriC DNA; dsDNA binds to the exterior of the filament while single-stranded (ss)DNA is stabiized in the filament's interior. The ATP-DnaA-oriC complex binds and stabilizes one strand of the AT-rich DNA unwinding element (DUE), permitting loading of DNA polymerase. After initiation quickly degrades to an ADP-DnaA complex that is not apt for DNA replication. Binds acidic phospholipids. The polypeptide is Chromosomal replication initiator protein DnaA (Escherichia coli (strain ATCC 8739 / DSM 1576 / NBRC 3972 / NCIMB 8545 / WDCM 00012 / Crooks)).